Reading from the N-terminus, the 414-residue chain is DNA primase small subunit PriS (414 aa).

Residues D98, D100, and D312 contribute to the active site.

This sequence belongs to the eukaryotic-type primase small subunit family. As to quaternary structure, heterodimer of a small subunit (PriS) and a large subunit (PriL). The cofactor is Mg(2+). It depends on Mn(2+) as a cofactor.

Its function is as follows. Catalytic subunit of DNA primase, an RNA polymerase that catalyzes the synthesis of short RNA molecules used as primers for DNA polymerase during DNA replication. The small subunit contains the primase catalytic core and has DNA synthesis activity on its own. Binding to the large subunit stabilizes and modulates the activity, increasing the rate of DNA synthesis while decreasing the length of the DNA fragments, and conferring RNA synthesis capability. The DNA polymerase activity may enable DNA primase to also catalyze primer extension after primer synthesis. May also play a role in DNA repair. The protein is DNA primase small subunit PriS of Methanosarcina mazei (strain ATCC BAA-159 / DSM 3647 / Goe1 / Go1 / JCM 11833 / OCM 88) (Methanosarcina frisia).